A 522-amino-acid chain; its full sequence is Lysine--tRNA ligase (522 aa).

Residues proline 44–threonine 52 carry the 'HIGH' region motif. The 'KMSKS' region motif lies at lysine 290–serine 294. Lysine 293 serves as a coordination point for ATP.

Belongs to the class-I aminoacyl-tRNA synthetase family.

The protein resides in the cytoplasm. It carries out the reaction tRNA(Lys) + L-lysine + ATP = L-lysyl-tRNA(Lys) + AMP + diphosphate. The sequence is that of Lysine--tRNA ligase from Rickettsia peacockii (strain Rustic).